Reading from the N-terminus, the 98-residue chain is Integration host factor subunit beta (98 aa).

Residues 59–98 (RTGRNPKTGESVTLPGKYVPHFKPGKEMRDRVNESIQSEG) form a disordered region. Positions 82-91 (PGKEMRDRVN) are enriched in basic and acidic residues.

It belongs to the bacterial histone-like protein family. Heterodimer of an alpha and a beta chain.

Functionally, this protein is one of the two subunits of integration host factor, a specific DNA-binding protein that functions in genetic recombination as well as in transcriptional and translational control. The protein is Integration host factor subunit beta of Saccharophagus degradans (strain 2-40 / ATCC 43961 / DSM 17024).